The following is a 260-amino-acid chain: Hydroxyethylthiazole kinase 1 (260 aa).

Met-39 is a substrate binding site. The ATP site is built by Arg-115 and Thr-160. Gly-187 is a substrate binding site.

The protein belongs to the Thz kinase family. It depends on Mg(2+) as a cofactor.

The catalysed reaction is 5-(2-hydroxyethyl)-4-methylthiazole + ATP = 4-methyl-5-(2-phosphooxyethyl)-thiazole + ADP + H(+). Its pathway is cofactor biosynthesis; thiamine diphosphate biosynthesis; 4-methyl-5-(2-phosphoethyl)-thiazole from 5-(2-hydroxyethyl)-4-methylthiazole: step 1/1. Catalyzes the phosphorylation of the hydroxyl group of 4-methyl-5-beta-hydroxyethylthiazole (THZ). The protein is Hydroxyethylthiazole kinase 1 of Streptococcus pneumoniae (strain 70585).